We begin with the raw amino-acid sequence, 430 residues long: Adenylosuccinate synthetase (430 aa).

Residues glycine 12–lysine 18 and glycine 40–threonine 42 each bind GTP. The active-site Proton acceptor is the aspartate 13. Aspartate 13 and glycine 40 together coordinate Mg(2+). IMP-binding positions include aspartate 13–lysine 16, asparagine 38–histidine 41, threonine 130, arginine 144, glutamine 225, threonine 240, and arginine 304. The active-site Proton donor is the histidine 41. Residue serine 300–arginine 306 participates in substrate binding. Residues arginine 306, lysine 332–aspartate 334, and serine 414–glycine 416 each bind GTP.

This sequence belongs to the adenylosuccinate synthetase family. As to quaternary structure, homodimer. Mg(2+) serves as cofactor.

It is found in the cytoplasm. It carries out the reaction IMP + L-aspartate + GTP = N(6)-(1,2-dicarboxyethyl)-AMP + GDP + phosphate + 2 H(+). It participates in purine metabolism; AMP biosynthesis via de novo pathway; AMP from IMP: step 1/2. In terms of biological role, plays an important role in the de novo pathway of purine nucleotide biosynthesis. Catalyzes the first committed step in the biosynthesis of AMP from IMP. This chain is Adenylosuccinate synthetase, found in Pelobacter propionicus (strain DSM 2379 / NBRC 103807 / OttBd1).